The chain runs to 520 residues: Basal body-orientation factor 1 (520 aa).

The span at 1–21 shows a compositional bias: basic residues; it reads MPKKKGKGKGKGKGKGKGKKD. The interval 1-34 is disordered; it reads MPKKKGKGKGKGKGKGKGKKDGKHDSKADRESEI. A compositionally biased stretch (basic and acidic residues) spans 22–34; sequence GKHDSKADRESEI. 2 coiled-coil regions span residues 27–175 and 245–386; these read KADR…REKM and VKEA…RQEA. Positions 468-492 are disordered; that stretch reads AHPPALSASSSEKIQVSSDAGSTVE. The span at 469–478 shows a compositional bias: low complexity; that stretch reads HPPALSASSS. The span at 479 to 492 shows a compositional bias: polar residues; that stretch reads EKIQVSSDAGSTVE.

This sequence belongs to the BBOF1 family.

It localises to the cytoplasm. Its subcellular location is the cytoskeleton. The protein localises to the cilium basal body. Its function is as follows. Basal body protein required in multiciliate cells to align and maintain cilia orientation in response to flow. May act by mediating a maturation step that stabilizes and aligns cilia orientation. Not required to respond to planar cell polarity (PCP) or flow-based orientation cues. This is Basal body-orientation factor 1 from Danio rerio (Zebrafish).